Reading from the N-terminus, the 364-residue chain is Long-wave-sensitive opsin 1 (364 aa).

The Extracellular portion of the chain corresponds to 1 to 58 (MTQRWGPQRLAGGQPQAGLEESTQASIFTYTNSNATRDPFEGPNYHIAPRWVYHLTSA). An O-linked (GlcNAc) serine glycan is attached at Ser-22. Residue Asn-34 is glycosylated (N-linked (GlcNAc...) asparagine). The helical transmembrane segment at 59–79 (WMIFVVIASVFTNGLVLVATM) threads the bilayer. Over 80-90 (RFKKLRHPLNW) the chain is Cytoplasmic. Residues 91–111 (ILVNLAIADLAETIIASTISV) form a helical membrane-spanning segment. Residues 112-126 (VNQIYGYFVLGHPLC) are Extracellular-facing. Residues Cys-126 and Cys-203 are joined by a disulfide bond. The helical transmembrane segment at 127 to 147 (VVEGYTVSLCGITGLWSLAII) threads the bilayer. At 148–168 (SWERWLVVCKPFGNVRFDAKL) the chain is on the cytoplasmic side. A helical transmembrane segment spans residues 169–189 (AIAGIAFSWIWAAVWTAPPIF). Topologically, residues 190–219 (GWSRYWPHGLKTSCGPDVFSGSSYPGVQSY) are extracellular. The helical transmembrane segment at 220-240 (MIVLMTTCCIIPLSVIILCYL) threads the bilayer. At 241–269 (QVWLAIRAVAKQQKESESTQKAEKEVTRM) the chain is on the cytoplasmic side. Residues 270–290 (VVVMVLAYCLCWGPYTFFACF) form a helical membrane-spanning segment. The Extracellular portion of the chain corresponds to 291–301 (AAAHPGYAFHP). A helical membrane pass occupies residues 302 to 324 (LVAALPAYFAKSATIYNPIIYVF). Lys-312 carries the N6-(retinylidene)lysine modification. Topologically, residues 325–364 (MNRQFRNCILQLFGKKVDDSSELSSASRTEASSVSSVSPA) are cytoplasmic.

It belongs to the G-protein coupled receptor 1 family. Opsin subfamily. In terms of processing, phosphorylated on some or all of the serine and threonine residues present in the C-terminal region. In terms of tissue distribution, the three color pigments are found in the cone photoreceptor cells.

It is found in the membrane. In terms of biological role, visual pigments are the light-absorbing molecules that mediate vision. They consist of an apoprotein, opsin, covalently linked to cis-retinal. This Canis lupus familiaris (Dog) protein is Long-wave-sensitive opsin 1 (OPN1LW).